We begin with the raw amino-acid sequence, 1134 residues long: Phytochrome 1 (1134 aa).

The 183-residue stretch at 219-401 (DIGLLCDTVV…VFGLQLNMEA (183 aa)) folds into the GAF domain. Cys-324 is a phytochromobilin binding site. The region spanning 616–687 (VANEMVRLIE…RLLYLALQGD (72 aa)) is the PAS 1 domain. The 57-residue stretch at 690–746 (QNVELKLKTFGGQKDKEAVILVVNACASRDVSDNVVGVCFVGQDVTGQKVVMDKFTR) folds into the PAC domain. Residues 750–821 (DYKAIVQNPN…KGQDAVTKFM (72 aa)) form the PAS 2 domain. One can recognise a Histidine kinase domain in the interval 901–1121 (YIRQEIKNPL…LVSLELPLAQ (221 aa)).

This sequence belongs to the phytochrome family. In terms of assembly, homodimer. In terms of processing, contains one covalently linked phytochromobilin chromophore.

In terms of biological role, regulatory photoreceptor which exists in two forms that are reversibly interconvertible by light: the Pr form that absorbs maximally in the red region of the spectrum and the Pfr form that absorbs maximally in the far-red region. Photoconversion of Pr to Pfr induces an array of morphogenic responses, whereas reconversion of Pfr to Pr cancels the induction of those responses. Pfr controls the expression of a number of nuclear genes including those encoding the small subunit of ribulose-bisphosphate carboxylase, chlorophyll A/B binding protein, protochlorophyllide reductase, rRNA, etc. It also controls the expression of its own gene(s) in a negative feedback fashion. The polypeptide is Phytochrome 1 (PHY1) (Selaginella martensii (Martens's spike moss)).